Consider the following 277-residue polypeptide: 4-hydroxy-3-methylbut-2-enyl diphosphate reductase (277 aa).

Cys-12 provides a ligand contact to [4Fe-4S] cluster. Residues His-36 and His-70 each contribute to the (2E)-4-hydroxy-3-methylbut-2-enyl diphosphate site. Residues His-36 and His-70 each contribute to the dimethylallyl diphosphate site. Isopentenyl diphosphate is bound by residues His-36 and His-70. Cys-92 lines the [4Fe-4S] cluster pocket. His-120 lines the (2E)-4-hydroxy-3-methylbut-2-enyl diphosphate pocket. Residue His-120 coordinates dimethylallyl diphosphate. Residue His-120 participates in isopentenyl diphosphate binding. Glu-122 functions as the Proton donor in the catalytic mechanism. Thr-158 provides a ligand contact to (2E)-4-hydroxy-3-methylbut-2-enyl diphosphate. Cys-186 contributes to the [4Fe-4S] cluster binding site. (2E)-4-hydroxy-3-methylbut-2-enyl diphosphate contacts are provided by Ser-214, Asn-216, and Ser-258. Residues Ser-214, Asn-216, and Ser-258 each coordinate dimethylallyl diphosphate. Isopentenyl diphosphate is bound by residues Ser-214, Asn-216, and Ser-258.

Belongs to the IspH family. [4Fe-4S] cluster serves as cofactor.

The enzyme catalyses isopentenyl diphosphate + 2 oxidized [2Fe-2S]-[ferredoxin] + H2O = (2E)-4-hydroxy-3-methylbut-2-enyl diphosphate + 2 reduced [2Fe-2S]-[ferredoxin] + 2 H(+). It carries out the reaction dimethylallyl diphosphate + 2 oxidized [2Fe-2S]-[ferredoxin] + H2O = (2E)-4-hydroxy-3-methylbut-2-enyl diphosphate + 2 reduced [2Fe-2S]-[ferredoxin] + 2 H(+). It functions in the pathway isoprenoid biosynthesis; dimethylallyl diphosphate biosynthesis; dimethylallyl diphosphate from (2E)-4-hydroxy-3-methylbutenyl diphosphate: step 1/1. Its pathway is isoprenoid biosynthesis; isopentenyl diphosphate biosynthesis via DXP pathway; isopentenyl diphosphate from 1-deoxy-D-xylulose 5-phosphate: step 6/6. Its function is as follows. Catalyzes the conversion of 1-hydroxy-2-methyl-2-(E)-butenyl 4-diphosphate (HMBPP) into a mixture of isopentenyl diphosphate (IPP) and dimethylallyl diphosphate (DMAPP). Acts in the terminal step of the DOXP/MEP pathway for isoprenoid precursor biosynthesis. This chain is 4-hydroxy-3-methylbut-2-enyl diphosphate reductase, found in Campylobacter jejuni subsp. jejuni serotype O:2 (strain ATCC 700819 / NCTC 11168).